The sequence spans 273 residues: Phosphatidylglycerol--prolipoprotein diacylglyceryl transferase (273 aa).

Transmembrane regions (helical) follow at residues 21–41 (VSVR…LWLA), 60–80 (LLFA…VIFY), 95–115 (VWTG…AMFW), 124–144 (FFGV…MGRM), 176–196 (SQLY…NWFI), 203–223 (GAVS…VEFV), and 237–257 (ISMG…MMVW). Residue Arg-143 participates in a 1,2-diacyl-sn-glycero-3-phospho-(1'-sn-glycerol) binding.

It belongs to the Lgt family.

It is found in the cell inner membrane. The enzyme catalyses L-cysteinyl-[prolipoprotein] + a 1,2-diacyl-sn-glycero-3-phospho-(1'-sn-glycerol) = an S-1,2-diacyl-sn-glyceryl-L-cysteinyl-[prolipoprotein] + sn-glycerol 1-phosphate + H(+). It functions in the pathway protein modification; lipoprotein biosynthesis (diacylglyceryl transfer). In terms of biological role, catalyzes the transfer of the diacylglyceryl group from phosphatidylglycerol to the sulfhydryl group of the N-terminal cysteine of a prolipoprotein, the first step in the formation of mature lipoproteins. This Vibrio campbellii (strain ATCC BAA-1116) protein is Phosphatidylglycerol--prolipoprotein diacylglyceryl transferase.